The following is a 45-amino-acid chain: Photosystem II reaction center protein K (45 aa).

Positions 1-8 (METALLLA) are excised as a propeptide. Residues 24–44 (LPLIPLFFLLLAFVWQASVGF) form a helical membrane-spanning segment.

This sequence belongs to the PsbK family. In terms of assembly, PSII is composed of 1 copy each of membrane proteins PsbA, PsbB, PsbC, PsbD, PsbE, PsbF, PsbH, PsbI, PsbJ, PsbK, PsbL, PsbM, PsbT, PsbX, PsbY, PsbZ, Psb30/Ycf12, peripheral proteins PsbO, CyanoQ (PsbQ), PsbU, PsbV and a large number of cofactors. It forms dimeric complexes.

The protein localises to the cellular thylakoid membrane. One of the components of the core complex of photosystem II (PSII). PSII is a light-driven water:plastoquinone oxidoreductase that uses light energy to abstract electrons from H(2)O, generating O(2) and a proton gradient subsequently used for ATP formation. It consists of a core antenna complex that captures photons, and an electron transfer chain that converts photonic excitation into a charge separation. The sequence is that of Photosystem II reaction center protein K from Microcystis aeruginosa (strain NIES-843 / IAM M-2473).